The chain runs to 621 residues: Methionine--tRNA ligase (621 aa).

A 'HIGH' region motif is present at residues 11-21 (PYANGPRHIGH). Zn(2+)-binding residues include C143, C146, C156, and C159. Positions 347-351 (KFSSS) match the 'KMSKS' region motif. Residue S350 coordinates ATP.

It belongs to the class-I aminoacyl-tRNA synthetase family. MetG type 1 subfamily. In terms of assembly, monomer. Zn(2+) is required as a cofactor.

The protein localises to the cytoplasm. It catalyses the reaction tRNA(Met) + L-methionine + ATP = L-methionyl-tRNA(Met) + AMP + diphosphate. Its function is as follows. Is required not only for elongation of protein synthesis but also for the initiation of all mRNA translation through initiator tRNA(fMet) aminoacylation. This is Methionine--tRNA ligase from Bifidobacterium longum subsp. infantis (strain ATCC 15697 / DSM 20088 / JCM 1222 / NCTC 11817 / S12).